Consider the following 49-residue polypeptide: Large ribosomal subunit protein bL33 (49 aa).

The protein belongs to the bacterial ribosomal protein bL33 family.

This Streptococcus pyogenes serotype M18 (strain MGAS8232) protein is Large ribosomal subunit protein bL33.